The sequence spans 203 residues: Ribosomal RNA small subunit methyltransferase G (203 aa).

S-adenosyl-L-methionine-binding positions include Gly-75, Leu-80, 126–127 (VE), and Arg-141.

This sequence belongs to the methyltransferase superfamily. RNA methyltransferase RsmG family.

Its subcellular location is the cytoplasm. The enzyme catalyses guanosine(527) in 16S rRNA + S-adenosyl-L-methionine = N(7)-methylguanosine(527) in 16S rRNA + S-adenosyl-L-homocysteine. In terms of biological role, specifically methylates the N7 position of guanine in position 527 of 16S rRNA. The sequence is that of Ribosomal RNA small subunit methyltransferase G from Ruthia magnifica subsp. Calyptogena magnifica.